Reading from the N-terminus, the 147-residue chain is Small nuclear ribonucleoprotein-associated protein B (147 aa).

The 84-residue stretch at 1 to 84 (MGTTKMVSLL…IVSLSVQGPP (84 aa)) folds into the Sm domain. Disordered stretches follow at residues 87–106 (DPSM…PAGR) and 128–147 (APPP…FRPV).

Belongs to the snRNP SmB/SmN family. Belongs to the 40S cdc5-associated complex (or cwf complex), a spliceosome sub-complex reminiscent of a late-stage spliceosome composed of the U2, U5 and U6 snRNAs and at least brr2, cdc5, cwf2/prp3, cwf3/syf1, cwf4/syf3, cwf5/ecm2, spp42/cwf6, cwf7/spf27, cwf8, cwf9, cwf10, cwf11, cwf12, prp45/cwf13, cwf14, cwf15, cwf16, cwf17, cwf18, cwf19, cwf20, cwf21, cwf22, cwf23, cwf24, cwf25, cwf26, cyp7/cwf27, cwf28, cwf29/ist3, lea1, msl1, prp5/cwf1, prp10, prp12/sap130, prp17, prp22, sap61, sap62, sap114, sap145, slu7, smb1, smd1, smd3, smf1, smg1 and syf2.

The protein resides in the nucleus. Its subcellular location is the cytoplasm. In terms of biological role, plays a role in pre-mRNA splicing as a core component of the spliceosomal U1, U2, U4 and U5 small nuclear ribonucleoproteins (snRNPs), the building blocks of the spliceosome. This is Small nuclear ribonucleoprotein-associated protein B (smb1) from Schizosaccharomyces pombe (strain 972 / ATCC 24843) (Fission yeast).